Consider the following 623-residue polypeptide: Protein EDS1 (623 aa).

A2 carries the post-translational modification N-acetylalanine. The Nucleophile role is filled by S123. Residues D187 and H317 each act as charge relay system in the active site. Positions 358-383 (VQAALEEEKKRVENQKKIIQVIEQER) form a coiled coil.

In terms of assembly, homodimer. Interacts with RPS4, RPS6, SNC1, SRFR1, AvrRps4 and HopA1. Part of a nuclear complex made of EDS1, PAD4 and SAG101, that can be redirected to the cytoplasm in the presence of an extranuclear form of EDS1. Interacts (via N-terminus) with PAD4 (via N-terminus). Interacts (via N-terminus) with SAG101. EDS1-SAG101 and EDS1-PAD4 form separate complexes in pathogen-unchallenged cells. Part of a nuclear protein complex made of VICTR, PAD4 and EDS1. Interacts with VICTR.

It localises to the nucleus. It is found in the cytoplasm. The protein localises to the microsome. Functionally, positive regulator of basal resistance and of effector-triggered immunity specifically mediated by TIR-NB-LRR (TNL) resistance proteins. Disruption by bacterial effector of EDS1-TIR-NB-LRR resistance protein interactions constitutes the first step in resistance activation. Acts redundantly with salicylic acid to regulate resistance gene-mediated signaling. Triggers early plant defenses and hypersensitive response independently of PAD4, and then recruits PAD4 to potentiate plant defenses through the accumulation of salicylic acid. Nuclear localization is essential for basal and TNL-conditioned immunity and for reprogramming defense gene expression, while cytoplasmic EDS1 is required to induce a complete immune response. Heterodimerization with PAD4 and/or SGA101 is necessary for TNL-mediated effector-triggered immunity. Contributes to nonhost resistance against E.amylovora. Loss of EDS1-PAD4 interaction compromises basal but not TNL-triggered resistance. Necessary for systemic acquired resistance (SAR) signal generation and perception. Has no direct lipase activity. Putative lipase activity is dispensable for immune functions. The polypeptide is Protein EDS1 (Arabidopsis thaliana (Mouse-ear cress)).